Consider the following 346-residue polypeptide: MARPQRTPARSPDSIVEVKSKFDAEFRRFALPRTSVRGFQEFSRLLCVVHQIPGLDVLLGYTDAHGDLLPLTNDDSLHRALASGPPPLRLLVQKRAEGDSSGLAFASNSLQRRKKGLLLRPVAPLRTRPPLLISLPQDFRQVSSVIDVDLLPETHRRVRLHKHGSDRPLGFYIRDGMSVRVAPQGLERVPGIFISRLVRGGLAESTGLLAVSDEILEVNGIEVAGKTLDQVTDMMVANSHNLIVTVKPANQRNNVVRGASGRLTGPSSVGPGPTDPDSDDDNSDPVIENRHPPCSNGLSQGPLCWDLQPGCLHPSAGSSLPSLDSREQANSGWGNGMRGDVSGFSL.

The tract at residues 1-116 (MARPQRTPAR…SNSLQRRKKG (116 aa)) is interaction with PRKCI and PRKCZ. The 81-residue stretch at 15–95 (IVEVKSKFDA…PPLRLLVQKR (81 aa)) folds into the PB1 domain. The interval 126–253 (RTRPPLLISL…VTVKPANQRN (128 aa)) is interaction with PARD3 and CDC42. One can recognise a Pseudo-CRIB domain in the interval 133–150 (ISLPQDFRQVSSVIDVDL). Positions 157-250 (RVRLHKHGSD…NLIVTVKPAN (94 aa)) constitute a PDZ domain. Disordered regions lie at residues 257-294 (RGASGRLTGPSSVGPGPTDPDSDDDNSDPVIENRHPPC) and 317-346 (GSSLPSLDSREQANSGWGNGMRGDVSGFSL). Position 278 is a phosphoserine (Ser278). Residues 317-332 (GSSLPSLDSREQANSG) are compositionally biased toward polar residues. Phosphoserine is present on Ser345.

The protein belongs to the PAR6 family. In terms of assembly, interacts with PALS1 and CRB3. Interacts with PARD3. Interacts with GTP-bound forms of CDC42, RHOQ/TC10 and RAC1. Interacts with the N-terminal part of PRKCI and PRKCZ. Part of a complex with PARD3, CDC42 or RAC1 and PRKCI or PRKCZ. Part of a complex with LLGL1 and PRKCI. Interacts with MAP2K5. Interacts with TGFBR1; involved in TGF-beta induced epithelial to mesenchymal transition. Interacts with ECT2 ('Thr-359' phosphorylated form) and PRKCI. Interacts with DCTN1 and PCM1. Phosphorylated by the TGF-beta receptor. Post-translationally, ubiquitinated by the SCF(FBXO31) complex, leading to its proteasomal degradation.

The protein resides in the cytoplasm. The protein localises to the cell membrane. Its subcellular location is the cell junction. It localises to the tight junction. It is found in the cytoskeleton. The protein resides in the microtubule organizing center. The protein localises to the centrosome. Its subcellular location is the centriolar satellite. In terms of biological role, adapter protein involved in asymmetrical cell division and cell polarization processes. Probably involved in the formation of epithelial tight junctions. Association with PARD3 may prevent the interaction of PARD3 with F11R/JAM1, thereby preventing tight junction assembly. The PARD6-PARD3 complex links GTP-bound Rho small GTPases to atypical protein kinase C proteins. Regulates centrosome organization and function. Essential for the centrosomal recruitment of key proteins that control centrosomal microtubule organization. The chain is Partitioning defective 6 homolog alpha (Pard6a) from Rattus norvegicus (Rat).